The chain runs to 96 residues: Glutamyl-tRNA(Gln) amidotransferase subunit C (96 aa).

This sequence belongs to the GatC family. Heterotrimer of A, B and C subunits.

It catalyses the reaction L-glutamyl-tRNA(Gln) + L-glutamine + ATP + H2O = L-glutaminyl-tRNA(Gln) + L-glutamate + ADP + phosphate + H(+). The catalysed reaction is L-aspartyl-tRNA(Asn) + L-glutamine + ATP + H2O = L-asparaginyl-tRNA(Asn) + L-glutamate + ADP + phosphate + 2 H(+). Functionally, allows the formation of correctly charged Asn-tRNA(Asn) or Gln-tRNA(Gln) through the transamidation of misacylated Asp-tRNA(Asn) or Glu-tRNA(Gln) in organisms which lack either or both of asparaginyl-tRNA or glutaminyl-tRNA synthetases. The reaction takes place in the presence of glutamine and ATP through an activated phospho-Asp-tRNA(Asn) or phospho-Glu-tRNA(Gln). The chain is Glutamyl-tRNA(Gln) amidotransferase subunit C from Neisseria meningitidis serogroup B (strain ATCC BAA-335 / MC58).